The primary structure comprises 336 residues: G-protein coupled receptor homolog FPV027 (336 aa).

Residues 1 to 31 are Extracellular-facing; that stretch reads MSMNNITSKMNQDSYGYFQLHMSDFTRVSLS. N-linked (GlcNAc...) asparagine; by host glycosylation occurs at Asn5. The helical transmembrane segment at 32–52 threads the bilayer; it reads IVFTLVFLVGIIGNAVIIWFI. At 53 to 63 the chain is on the cytoplasmic side; that stretch reads GFKWTKTISTL. The chain crosses the membrane as a helical span at residues 64-84; the sequence is LFINLALADSLFLIFIPVYTV. Residues 85–101 lie on the Extracellular side of the membrane; sequence YVLSNFHWYLGEFLCRV. A disulfide bridge connects residues Cys99 and Cys178. Residues 102–122 form a helical membrane-spanning segment; the sequence is SSFFFTTNMYASMFLLTFISI. Over 123-143 the chain is Cytoplasmic; it reads DKYLTLTSHRLVYKYRKYRNY. Residues 144–164 form a helical membrane-spanning segment; sequence YVCIGAIWCISIALGVPTLYY. The Extracellular portion of the chain corresponds to 165–200; the sequence is KRVILSSSRNETRCISYYGDDKHTAITIYRIIVCIR. Asn174 carries an N-linked (GlcNAc...) asparagine; by host glycan. Residues 201–221 form a helical membrane-spanning segment; it reads FIIGYVFPMTVILLSYALIVY. Residues 222 to 240 lie on the Cytoplasmic side of the membrane; that stretch reads KVKFINKPPNRSFMITTAS. A helical transmembrane segment spans residues 241-261; the sequence is IFVFLACWTPHHVLNIISLYG. Residues 262–276 are Extracellular-facing; sequence LKSTSMYNYIKESIP. The chain crosses the membrane as a helical span at residues 277-297; sequence FVNAIAFVYSAINPIIYIFVI. The Cytoplasmic segment spans residues 298–336; that stretch reads RLTSTYDSDTMDELRSALLDEETTSTEDCSDIEISDISR.

Belongs to the G-protein coupled receptor 1 family.

Its subcellular location is the host cell membrane. The sequence is that of G-protein coupled receptor homolog FPV027 from Vertebrata (FPV).